Consider the following 482-residue polypeptide: Glutamyl-tRNA(Gln) amidotransferase subunit A (482 aa).

Active-site charge relay system residues include K75 and S150. S174 acts as the Acyl-ester intermediate in catalysis.

Belongs to the amidase family. GatA subfamily. Heterotrimer of A, B and C subunits.

It catalyses the reaction L-glutamyl-tRNA(Gln) + L-glutamine + ATP + H2O = L-glutaminyl-tRNA(Gln) + L-glutamate + ADP + phosphate + H(+). Its function is as follows. Allows the formation of correctly charged Gln-tRNA(Gln) through the transamidation of misacylated Glu-tRNA(Gln) in organisms which lack glutaminyl-tRNA synthetase. The reaction takes place in the presence of glutamine and ATP through an activated gamma-phospho-Glu-tRNA(Gln). The protein is Glutamyl-tRNA(Gln) amidotransferase subunit A of Acaryochloris marina (strain MBIC 11017).